We begin with the raw amino-acid sequence, 1207 residues long: Chromosomal serine/threonine-protein kinase JIL-1 (1207 aa).

Over residues 1-19 the composition is skewed to polar residues; it reads MSRLQKQNYEILSGTSTSR. Disordered stretches follow at residues 1-119, 164-183, and 210-230; these read MSRL…ASAR, QDMEEDEPNGIEIDESSSSL, and SSSTTPSYAMPTSNSTPLDLD. A phosphoserine mark is found at Ser-29 and Ser-31. Over residues 45-69 the composition is skewed to polar residues; the sequence is LNGQLVANGNGKTRKNSNSETMTNG. Low complexity predominate over residues 88-97; it reads NYNNNNNNNN. A compositionally biased stretch (polar residues) spans 98-108; that stretch reads SISATNGQYTN. The span at 109–118 shows a compositional bias: low complexity; sequence SSSKTTSASA. The span at 164–178 shows a compositional bias: acidic residues; the sequence is QDMEEDEPNGIEIDE. Positions 213-226 are enriched in polar residues; that stretch reads TTPSYAMPTSNSTP. Residues 261 to 530 form the Protein kinase 1 domain; that stretch reads FKIIRVLGTG…ASEIKEHPFF (270 aa). ATP contacts are provided by residues 267–275 and Lys-293; that span reads LGTGAYGRV. The active-site Proton acceptor is the Asp-389. A Phosphoserine modification is found at Ser-424. Residues 531–599 enclose the AGC-kinase C-terminal domain; that stretch reads NGINWQELRT…VAPEHLEQMR (69 aa). Phosphothreonine is present on Thr-588. Residues 623–886 enclose the Protein kinase 2 domain; that stretch reads LELGTRTSNG…LSDILDSEWL (264 aa). ATP-binding positions include 629–637 and Lys-652; that span reads TSNGAYGTC. The Proton acceptor role is filled by Asp-739. At Thr-1045 the chain carries Phosphothreonine. Ser-1047 is subject to Phosphoserine. The tract at residues 1168–1197 is disordered; the sequence is TFPRPKAQLKRTKREPKVPRPPTRVQPERA.

Belongs to the protein kinase superfamily. Ser/Thr protein kinase family. Interacts with lola. Interacts with proteins of the male specific lethal (MSL) dosage compensation complex; this interaction is mediated by the kinase domains. Requires Mg(2+) as cofactor. Post-translationally, autophosphorylated in vitro.

It is found in the nucleus. Its subcellular location is the chromosome. It catalyses the reaction L-seryl-[protein] + ATP = O-phospho-L-seryl-[protein] + ADP + H(+). It carries out the reaction L-threonyl-[protein] + ATP = O-phospho-L-threonyl-[protein] + ADP + H(+). In terms of biological role, phosphorylates 'Ser-10' of histone H3. May regulate gene expression by establishing or maintaining the structure of more open chromatin regions. Also required for normal polytene chromosome structure, for oogenesis and for viability throughout development. Regulates the structure of polytene chromosomes in salivary glands. May phosphorylate 'Ser-1' of histone H2A. The protein is Chromosomal serine/threonine-protein kinase JIL-1 of Drosophila melanogaster (Fruit fly).